We begin with the raw amino-acid sequence, 178 residues long: ATP synthase subunit b (178 aa).

A helical membrane pass occupies residues 11–31 (IIPEPVEIVVGLVAFLLLLFV).

The protein belongs to the ATPase B chain family. In terms of assembly, F-type ATPases have 2 components, F(1) - the catalytic core - and F(0) - the membrane proton channel. F(1) has five subunits: alpha(3), beta(3), gamma(1), delta(1), epsilon(1). F(0) has three main subunits: a(1), b(2) and c(10-14). The alpha and beta chains form an alternating ring which encloses part of the gamma chain. F(1) is attached to F(0) by a central stalk formed by the gamma and epsilon chains, while a peripheral stalk is formed by the delta and b chains.

It is found in the cell membrane. F(1)F(0) ATP synthase produces ATP from ADP in the presence of a proton or sodium gradient. F-type ATPases consist of two structural domains, F(1) containing the extramembraneous catalytic core and F(0) containing the membrane proton channel, linked together by a central stalk and a peripheral stalk. During catalysis, ATP synthesis in the catalytic domain of F(1) is coupled via a rotary mechanism of the central stalk subunits to proton translocation. Its function is as follows. Component of the F(0) channel, it forms part of the peripheral stalk, linking F(1) to F(0). In Saccharopolyspora erythraea (strain ATCC 11635 / DSM 40517 / JCM 4748 / NBRC 13426 / NCIMB 8594 / NRRL 2338), this protein is ATP synthase subunit b.